We begin with the raw amino-acid sequence, 66 residues long: Beta-defensin 13 (66 aa).

A signal peptide spans 1-22 (MRIFSLIVAGLVLLIQLHPAKG). Cystine bridges form between Cys30–Cys59, Cys37–Cys51, and Cys41–Cys60.

Belongs to the beta-defensin family.

The protein resides in the secreted. Its function is as follows. Has antibacterial activity. The chain is Beta-defensin 13 (Defb13) from Rattus norvegicus (Rat).